Consider the following 880-residue polypeptide: Leucine--tRNA ligase (880 aa).

Residues 46 to 56 (PYPSGALHMGH) carry the 'HIGH' region motif. The short motif at 638 to 642 (KMSKS) is the 'KMSKS' region element. Lys641 contacts ATP.

This sequence belongs to the class-I aminoacyl-tRNA synthetase family.

It localises to the cytoplasm. It catalyses the reaction tRNA(Leu) + L-leucine + ATP = L-leucyl-tRNA(Leu) + AMP + diphosphate. This Xanthomonas oryzae pv. oryzae (strain KACC10331 / KXO85) protein is Leucine--tRNA ligase.